Here is a 68-residue protein sequence, read N- to C-terminus: Large ribosomal subunit protein bL35 (68 aa).

Belongs to the bacterial ribosomal protein bL35 family.

This Rickettsia felis (strain ATCC VR-1525 / URRWXCal2) (Rickettsia azadi) protein is Large ribosomal subunit protein bL35.